A 467-amino-acid chain; its full sequence is tRNA-2-methylthio-N(6)-dimethylallyladenosine synthase (467 aa).

The 117-residue stretch at 2-118 (PSVFIKTFGC…VAEIADNLLK (117 aa)) folds into the MTTase N-terminal domain. [4Fe-4S] cluster-binding residues include Cys-11, Cys-47, Cys-81, Cys-159, Cys-163, and Cys-166. Residues 145-379 (TKAQPIAYVS…LEIQNKITME (235 aa)) form the Radical SAM core domain. Residues 382–445 (QKWVGQVVEI…GHTFYGTPLI (64 aa)) enclose the TRAM domain.

This sequence belongs to the methylthiotransferase family. MiaB subfamily. As to quaternary structure, monomer. [4Fe-4S] cluster is required as a cofactor.

The protein localises to the cytoplasm. The catalysed reaction is N(6)-dimethylallyladenosine(37) in tRNA + (sulfur carrier)-SH + AH2 + 2 S-adenosyl-L-methionine = 2-methylsulfanyl-N(6)-dimethylallyladenosine(37) in tRNA + (sulfur carrier)-H + 5'-deoxyadenosine + L-methionine + A + S-adenosyl-L-homocysteine + 2 H(+). In terms of biological role, catalyzes the methylthiolation of N6-(dimethylallyl)adenosine (i(6)A), leading to the formation of 2-methylthio-N6-(dimethylallyl)adenosine (ms(2)i(6)A) at position 37 in tRNAs that read codons beginning with uridine. This chain is tRNA-2-methylthio-N(6)-dimethylallyladenosine synthase, found in Methylacidiphilum infernorum (isolate V4) (Methylokorus infernorum (strain V4)).